Reading from the N-terminus, the 226-residue chain is DNA mismatch repair protein MutH (226 aa).

This sequence belongs to the MutH family.

The protein resides in the cytoplasm. Sequence-specific endonuclease that cleaves unmethylated GATC sequences. It is involved in DNA mismatch repair. This is DNA mismatch repair protein MutH from Haemophilus ducreyi (strain 35000HP / ATCC 700724).